A 294-amino-acid polypeptide reads, in one-letter code: NAD kinase (294 aa).

The active-site Proton acceptor is Asp73. NAD(+)-binding positions include 73–74, 147–148, Arg175, Asp177, and 188–193; these read DG, ND, and TAYALS.

Belongs to the NAD kinase family. The cofactor is a divalent metal cation.

The protein localises to the cytoplasm. It carries out the reaction NAD(+) + ATP = ADP + NADP(+) + H(+). Functionally, involved in the regulation of the intracellular balance of NAD and NADP, and is a key enzyme in the biosynthesis of NADP. Catalyzes specifically the phosphorylation on 2'-hydroxyl of the adenosine moiety of NAD to yield NADP. This chain is NAD kinase, found in Nitrosospira multiformis (strain ATCC 25196 / NCIMB 11849 / C 71).